A 220-amino-acid chain; its full sequence is Homeobox-leucine zipper protein ATHB-21 (220 aa).

Positions 26–48 (VPQQGGEAKPTRRRKRKSKSVVV) are disordered. Positions 58 to 117 (GWFRKRKLSDEQVRMLEISFEDDHKLESERKDRLASELGLDPRQVAVWFQNRRARWKNKR) form a DNA-binding region, homeobox. Residues 118–146 (VEDEYTKLKNAYETTVVEKCRLDSEVIHL) are leucine-zipper.

Belongs to the HD-ZIP homeobox family. Class I subfamily. Widely expressed.

The protein resides in the nucleus. Functionally, probable transcription factor. This is Homeobox-leucine zipper protein ATHB-21 (ATHB-21) from Arabidopsis thaliana (Mouse-ear cress).